We begin with the raw amino-acid sequence, 299 residues long: Tyrosine recombinase XerC (299 aa).

Residues 1–85 enclose the Core-binding (CB) domain; sequence MERQLEAYCA…AVRGLYRYLN (85 aa). Residues 106–285 form the Tyr recombinase domain; the sequence is RLPKTLDTDR…DFQHLAAVYD (180 aa). Catalysis depends on residues arginine 146, lysine 170, histidine 237, arginine 240, and histidine 263. Residue tyrosine 272 is the O-(3'-phospho-DNA)-tyrosine intermediate of the active site.

The protein belongs to the 'phage' integrase family. XerC subfamily. Forms a cyclic heterotetrameric complex composed of two molecules of XerC and two molecules of XerD.

Its subcellular location is the cytoplasm. Functionally, site-specific tyrosine recombinase, which acts by catalyzing the cutting and rejoining of the recombining DNA molecules. The XerC-XerD complex is essential to convert dimers of the bacterial chromosome into monomers to permit their segregation at cell division. It also contributes to the segregational stability of plasmids. The sequence is that of Tyrosine recombinase XerC from Pseudomonas entomophila (strain L48).